Here is a 153-residue protein sequence, read N- to C-terminus: Small ribosomal subunit protein uS12m (153 aa).

The N-terminal 20 residues, M1 to L20, are a transit peptide targeting the mitochondrion.

Belongs to the universal ribosomal protein uS12 family. In terms of assembly, component of the mitochondrial small ribosomal subunit (mt-SSU). Mature yeast 74S mitochondrial ribosomes consist of a small (37S) and a large (54S) subunit. The 37S small subunit contains a 15S ribosomal RNA (15S mt-rRNA) and 34 different proteins. The 54S large subunit contains a 21S rRNA (21S mt-rRNA) and 46 different proteins. uS12m forms part of the decoding center of the mt-SSU.

The protein localises to the mitochondrion. In terms of biological role, component of the mitochondrial ribosome (mitoribosome), a dedicated translation machinery responsible for the synthesis of mitochondrial genome-encoded proteins, including at least some of the essential transmembrane subunits of the mitochondrial respiratory chain. The mitoribosomes are attached to the mitochondrial inner membrane and translation products are cotranslationally integrated into the membrane. uS12m is required for respiratory growth. This is Small ribosomal subunit protein uS12m (MRPS12) from Saccharomyces cerevisiae (strain ATCC 204508 / S288c) (Baker's yeast).